Consider the following 543-residue polypeptide: CTP synthase (543 aa).

Residues Met1–Leu265 form an amidoligase domain region. Ser13 provides a ligand contact to CTP. Ser13 is a UTP binding site. Ser14–Ile19 serves as a coordination point for ATP. Tyr54 serves as a coordination point for L-glutamine. Asp71 lines the ATP pocket. Mg(2+) contacts are provided by Asp71 and Glu139. Residues Asp146–Glu148, Lys186–Gln191, and Lys222 each bind CTP. Residues Lys186 to Gln191 and Lys222 contribute to the UTP site. Val240 is an ATP binding site. In terms of domain architecture, Glutamine amidotransferase type-1 spans Thr291–Leu542. Gly353 contacts L-glutamine. The active-site Nucleophile; for glutamine hydrolysis is Cys380. L-glutamine is bound by residues Phe381 to Gln384, Glu404, and Arg470. Residues His515 and Glu517 contribute to the active site.

The protein belongs to the CTP synthase family. In terms of assembly, homotetramer.

The enzyme catalyses UTP + L-glutamine + ATP + H2O = CTP + L-glutamate + ADP + phosphate + 2 H(+). It carries out the reaction L-glutamine + H2O = L-glutamate + NH4(+). It catalyses the reaction UTP + NH4(+) + ATP = CTP + ADP + phosphate + 2 H(+). The protein operates within pyrimidine metabolism; CTP biosynthesis via de novo pathway; CTP from UDP: step 2/2. Allosterically activated by GTP, when glutamine is the substrate; GTP has no effect on the reaction when ammonia is the substrate. The allosteric effector GTP functions by stabilizing the protein conformation that binds the tetrahedral intermediate(s) formed during glutamine hydrolysis. Inhibited by the product CTP, via allosteric rather than competitive inhibition. Its function is as follows. Catalyzes the ATP-dependent amination of UTP to CTP with either L-glutamine or ammonia as the source of nitrogen. Regulates intracellular CTP levels through interactions with the four ribonucleotide triphosphates. The chain is CTP synthase from Acidiphilium cryptum (strain JF-5).